The following is a 575-amino-acid chain: Protein NRD1 (575 aa).

The CID domain occupies 1–153; the sequence is MQQDDDFQNF…AIRSKCFAMD (153 aa). The disordered stretch occupies residues 225 to 282; that stretch reads SHTSVGTVAPPQAHTITEYGSRRERERERERYNSRRNRSRSPPAPFSQPSTGRKDRYP. Basic and acidic residues predominate over residues 244–257; the sequence is GSRRERERERERYN. Phosphoserine is present on residues Ser-263, Ser-265, and Ser-271. In terms of domain architecture, RRM spans 339 to 409; the sequence is RTLFIGGVPL…LPLRTRWGVG (71 aa). Positions 468–575 are disordered; sequence VSSKAISQKM…NQQQQQQQQS (108 aa). 2 stretches are compositionally biased toward polar residues: residues 471–482 and 491–501; these read KAISQKMPTDSG and PNKSGSISSIS. Low complexity-rich tracts occupy residues 517–527 and 549–575; these read QYVQPMMQQPY and QQQF…QQQS.

The protein resides in the nucleus. Plays a role in sequence-specific regulation of nuclear pre-mRNA abundance. The chain is Protein NRD1 (NRD1) from Saccharomyces cerevisiae (strain ATCC 204508 / S288c) (Baker's yeast).